A 289-amino-acid chain; its full sequence is Probable branched-chain-amino-acid aminotransferase (289 aa).

Lys-154 is modified (N6-(pyridoxal phosphate)lysine).

This sequence belongs to the class-IV pyridoxal-phosphate-dependent aminotransferase family. The cofactor is pyridoxal 5'-phosphate.

It carries out the reaction L-leucine + 2-oxoglutarate = 4-methyl-2-oxopentanoate + L-glutamate. It catalyses the reaction L-isoleucine + 2-oxoglutarate = (S)-3-methyl-2-oxopentanoate + L-glutamate. The enzyme catalyses L-valine + 2-oxoglutarate = 3-methyl-2-oxobutanoate + L-glutamate. Its pathway is amino-acid biosynthesis; L-isoleucine biosynthesis; L-isoleucine from 2-oxobutanoate: step 4/4. It functions in the pathway amino-acid biosynthesis; L-leucine biosynthesis; L-leucine from 3-methyl-2-oxobutanoate: step 4/4. It participates in amino-acid biosynthesis; L-valine biosynthesis; L-valine from pyruvate: step 4/4. Its function is as follows. Acts on leucine, isoleucine and valine. This chain is Probable branched-chain-amino-acid aminotransferase (ilvE), found in Rickettsia bellii (strain RML369-C).